The following is a 205-amino-acid chain: Putative 3-methyladenine DNA glycosylase (205 aa).

The protein belongs to the DNA glycosylase MPG family.

The protein is Putative 3-methyladenine DNA glycosylase of Bacillus anthracis (strain A0248).